The primary structure comprises 393 residues: Carbamoyl phosphate synthase small chain (393 aa).

The CPSase stretch occupies residues 1–194 (MSKDTTTYQG…TYVIEAEGEE (194 aa)). Positions 61, 245, and 247 each coordinate L-glutamine. In terms of domain architecture, Glutamine amidotransferase type-1 spans 195 to 390 (RHTVVAYDLG…VELMDADAQK (196 aa)). Cysteine 273 (nucleophile) is an active-site residue. The L-glutamine site is built by phenylalanine 274, glutamine 277, asparagine 315, glycine 317, and phenylalanine 318. Active-site residues include histidine 363 and glutamate 365.

Belongs to the CarA family. As to quaternary structure, composed of two chains; the small (or glutamine) chain promotes the hydrolysis of glutamine to ammonia, which is used by the large (or ammonia) chain to synthesize carbamoyl phosphate. Tetramer of heterodimers (alpha,beta)4.

It catalyses the reaction hydrogencarbonate + L-glutamine + 2 ATP + H2O = carbamoyl phosphate + L-glutamate + 2 ADP + phosphate + 2 H(+). The catalysed reaction is L-glutamine + H2O = L-glutamate + NH4(+). Its pathway is amino-acid biosynthesis; L-arginine biosynthesis; carbamoyl phosphate from bicarbonate: step 1/1. It functions in the pathway pyrimidine metabolism; UMP biosynthesis via de novo pathway; (S)-dihydroorotate from bicarbonate: step 1/3. Its function is as follows. Small subunit of the glutamine-dependent carbamoyl phosphate synthetase (CPSase). CPSase catalyzes the formation of carbamoyl phosphate from the ammonia moiety of glutamine, carbonate, and phosphate donated by ATP, constituting the first step of 2 biosynthetic pathways, one leading to arginine and/or urea and the other to pyrimidine nucleotides. The small subunit (glutamine amidotransferase) binds and cleaves glutamine to supply the large subunit with the substrate ammonia. This Corynebacterium glutamicum (strain ATCC 13032 / DSM 20300 / JCM 1318 / BCRC 11384 / CCUG 27702 / LMG 3730 / NBRC 12168 / NCIMB 10025 / NRRL B-2784 / 534) protein is Carbamoyl phosphate synthase small chain.